The chain runs to 598 residues: Inactive metallocarboxypeptidase ECM14 (598 aa).

The N-terminal stretch at 1 to 21 (MRLFTHGQVLALLAFVNTISA) is a signal peptide. Residues 22-174 (IPSFSTNSYP…QTIYESYPSP (153 aa)) constitute a propeptide that is removed on maturation. The Peptidase M14 domain maps to 202 to 522 (NYQPLSVIVP…NAVMMLGRFL (321 aa)). The Zn(2+) site is built by H264 and E267. Residues 264 to 267 (HARE), R322, and 339 to 340 (DR) contribute to the substrate site. C333 and C356 form a disulfide bridge. Residue N349 is glycosylated (N-linked (GlcNAc...) asparagine). Residue H396 participates in Zn(2+) binding. 397-398 (SY) contacts substrate. Positions 539–598 (QRPNKDDKPILNDDDDDDDADTNDDGIGRKDDSWIPDEYKGDNDRDESDGGWAFRRLRKR) are disordered. Residues 550-562 (NDDDDDDDADTND) are compositionally biased toward acidic residues. Basic and acidic residues predominate over residues 564–581 (GIGRKDDSWIPDEYKGDN).

It belongs to the peptidase M14 family. It depends on Zn(2+) as a cofactor.

Its subcellular location is the vacuole. The protein localises to the secreted. Functionally, inactive carboxypeptidase that may play a role in cell wall organization and biogenesis. The sequence is that of Inactive metallocarboxypeptidase ECM14 (ECM14) from Ajellomyces capsulatus (strain H143) (Darling's disease fungus).